Here is a 252-residue protein sequence, read N- to C-terminus: tRNA (guanine-N(1)-)-methyltransferase (252 aa).

Residues Gly-113 and 133–138 each bind S-adenosyl-L-methionine; that span reads IGDYVL.

This sequence belongs to the RNA methyltransferase TrmD family. Homodimer.

The protein localises to the cytoplasm. The catalysed reaction is guanosine(37) in tRNA + S-adenosyl-L-methionine = N(1)-methylguanosine(37) in tRNA + S-adenosyl-L-homocysteine + H(+). In terms of biological role, specifically methylates guanosine-37 in various tRNAs. This chain is tRNA (guanine-N(1)-)-methyltransferase, found in Nitrosococcus oceani (strain ATCC 19707 / BCRC 17464 / JCM 30415 / NCIMB 11848 / C-107).